Here is a 405-residue protein sequence, read N- to C-terminus: N-methyltransferase nanE (405 aa).

Residues 238–239 (GG), Asp261, and 290–291 (HH) each bind S-adenosyl-L-methionine.

The protein belongs to the class I-like SAM-binding methyltransferase superfamily. Cation-independent O-methyltransferase family.

Its pathway is secondary metabolite biosynthesis. In terms of biological role, N-methyltransferase; part of the gene cluster that mediates the biosynthesis of the benzazepine alkaloid nanangelenin A which contains an unprecedented 3,4-dihydro-1-benzazepine-2,5-dione-N-prenyl-N-acetoxy-anthranilamide scaffold. The first step of nanangelenin biosynthesis is catalyzed by the indoleamine 2,3-dioxygenase nanC which produces N-formyl-kynurenine through the catabolism of tryptophan. The two-module NRPS nanA then utilizes anthranilate (Ant) and L-kynurenine (L-Kyn) to assemble the dipeptide product nanangelenin B. The first adenylation domain of nanA (A1) loads anthranilate onto the T1 domain, while A2 loads kynurenine, generated through spontaneous nonenzymatic deformylation of the nanC-supplied N-formyl-kynurenine. The peptide bond formation between the tethered amino acids is catalyzed by the first condensation domain (C1) between anthranilate's carbonyl carbon and kynurenine's aliphatic primary amine. The second C domain (C2) catalyzes the final cyclization event between the aromatic amine of kynurenine and the tethered carbonyl carbon, yielding nanangelenin B. The terminal T3 domain enhances the catalytic efficiency of C2, suggesting the T2-tethered Ant-L-Kyn is transferred to T3 prior to cyclization by C2. Once released from nanA, nanangelenin B is then prenylated by the prenyltransferase nanD to form nanangelenin C. Nanangelenin C is then N-hydroxylated by the FAD-dependent monooxygenase nanF and further acetylated by the acetyltransferase nanB to yield nanangelenin F. Finally, the N-methyltransferase nanE methylates the amide nitrogen of 1-benzazepine to convert nanangelenin F into nanangelenin A. NanE is also able to methylate most of the intermediates of the pathway such as nanangelenin B and nanangelenin C to produce nanangelenin D and nanangelenin E, respectively. The chain is N-methyltransferase nanE from Aspergillus nanangensis.